The primary structure comprises 590 residues: Phosphomethylpyrimidine synthase (590 aa).

Substrate-binding positions include asparagine 197, methionine 226, tyrosine 255, histidine 291, 311–313 (SRG), 352–355 (DGLR), and glutamate 391. Histidine 395 is a Zn(2+) binding site. Tyrosine 418 lines the substrate pocket. Zn(2+) is bound at residue histidine 459. Cysteine 539, cysteine 542, and cysteine 547 together coordinate [4Fe-4S] cluster.

The protein belongs to the ThiC family. [4Fe-4S] cluster serves as cofactor.

The catalysed reaction is 5-amino-1-(5-phospho-beta-D-ribosyl)imidazole + S-adenosyl-L-methionine = 4-amino-2-methyl-5-(phosphooxymethyl)pyrimidine + CO + 5'-deoxyadenosine + formate + L-methionine + 3 H(+). Its pathway is cofactor biosynthesis; thiamine diphosphate biosynthesis. Its function is as follows. Catalyzes the synthesis of the hydroxymethylpyrimidine phosphate (HMP-P) moiety of thiamine from aminoimidazole ribotide (AIR) in a radical S-adenosyl-L-methionine (SAM)-dependent reaction. In Bacillus velezensis (strain DSM 23117 / BGSC 10A6 / LMG 26770 / FZB42) (Bacillus amyloliquefaciens subsp. plantarum), this protein is Phosphomethylpyrimidine synthase.